Consider the following 553-residue polypeptide: Putative transport protein YidE (553 aa).

A run of 5 helical transmembrane segments spans residues 4–24 (IALTVSILALVAVVGLFIGNV), 28–48 (GIGLGIGGVLFGGIIVGHFVS), 65–85 (FGLILFVYTIGIQVGPGFFAS), 95–115 (LFAVLIVIIGGLVTAILHKLF), and 158–178 (MSYAMAYPFGICGILFTMWML). RCK C-terminal domains follow at residues 191-276 (QQHE…VIGQ) and 279-361 (DTSL…VLGN). Transmembrane regions (helical) follow at residues 371–391 (MLPVFIGIGLGVLLGSIPVFV), 393–413 (GFPAALKLGLAGGPLIMALIL), 439–459 (IVLFLSIVGLKSGGDFVNTLV), 464–484 (LSWIGYGALITAVPLITVGIL), 493–513 (YLTMCGMLAGSMTDPPALAFA), and 533–553 (LVMFLRIITPQLLAVLFWSIG).

Belongs to the AAE transporter (TC 2.A.81) family. YidE subfamily.

Its subcellular location is the cell membrane. The protein is Putative transport protein YidE of Shigella flexneri serotype 5b (strain 8401).